We begin with the raw amino-acid sequence, 453 residues long: Gamma-aminobutyric acid receptor subunit alpha-6 (453 aa).

The N-terminal stretch at 1–19 (MVLLLPWLFIILWLENAQA) is a signal peptide. The Extracellular segment spans residues 20 to 243 (QLEDEGNFYS…FHLQRKMGYF (224 aa)). Residue asparagine 31 is glycosylated (N-linked (GlcNAc...) asparagine). A 4-aminobutanoate-binding site is contributed by arginine 84. N-linked (GlcNAc...) asparagine glycans are attached at residues asparagine 128 and asparagine 141. Threonine 147 is a 4-aminobutanoate binding site. A disulfide bridge links cysteine 156 with cysteine 170. Residues 244–264 (MIQIYTPCIMTVILSQVSFWI) traverse the membrane as a helical segment. Residues 265 to 270 (NKESVP) lie on the Cytoplasmic side of the membrane. The chain crosses the membrane as a helical span at residues 271–290 (ARTVFGITTVLTMTTLSISA). Over 291–304 (RHSLPKVSYATAMD) the chain is Extracellular. A helical membrane pass occupies residues 305–325 (WFIAVCFAFVFSALIEFAAVN). Topologically, residues 326–422 (YFTNLQSQKA…GTSKIDQYSR (97 aa)) are cytoplasmic. A Phosphoserine modification is found at serine 375. The chain crosses the membrane as a helical span at residues 423 to 443 (ILFPVAFAGFNLVYWIVYLSK). At 444–453 (DTMEVSSTVE) the chain is on the extracellular side.

This sequence belongs to the ligand-gated ion channel (TC 1.A.9) family. Gamma-aminobutyric acid receptor (TC 1.A.9.5) subfamily. GABRA6 sub-subfamily. In terms of assembly, heteropentamer, formed by a combination of alpha (GABRA1-6), beta (GABRB1-3), gamma (GABRG1-3), delta (GABRD), epsilon (GABRE), rho (GABRR1-3), pi (GABRP) and theta (GABRQ) chains, each subunit exhibiting distinct physiological and pharmacological properties. Binds UBQLN1. In terms of tissue distribution, expressed in brain, in cerebellar granule cells.

Its subcellular location is the postsynaptic cell membrane. It localises to the cell membrane. It carries out the reaction chloride(in) = chloride(out). Alpha subunit of the heteropentameric ligand-gated chloride channel gated by gamma-aminobutyric acid (GABA), a major inhibitory neurotransmitter in the brain. GABA-gated chloride channels, also named GABA(A) receptors (GABAAR), consist of five subunits arranged around a central pore and contain GABA active binding site(s) located at the alpha and beta subunit interface(s). When activated by GABA, GABAARs selectively allow the flow of chloride anions across the cell membrane down their electrochemical gradient. Alpha-6/GABRA6 subunits are found at both synaptic and extrasynaptic sites. Chloride influx into the postsynaptic neuron following GABAAR opening decreases the neuron ability to generate a new action potential, thereby reducing nerve transmission. Extrasynaptic alpha-6-containing receptors contribute to the tonic GABAergic inhibition. Alpha-6 subunits are also present on glutamatergic synapses. The protein is Gamma-aminobutyric acid receptor subunit alpha-6 of Mus musculus (Mouse).